A 183-amino-acid polypeptide reads, in one-letter code: Histone deacetylase complex subunit SAP30L (183 aa).

An N-acetylmethionine modification is found at M1. Residues 1 to 10 are compositionally biased toward acidic residues; sequence MNGFSTEEDS. Residues 1-23 form a disordered region; sequence MNGFSTEEDSREGPPAAPAAAAP. Disulfide bonds link C29/C30 and C38/C74. The Atypical zinc-finger motif lies at 29-77; that stretch reads CCLIEDGERCVRPAGNASFSKRVQKSISQKKLKLDIDKSVRHLYICDFH. K49 participates in a covalent cross-link: Glycyl lysine isopeptide (Lys-Gly) (interchain with G-Cter in SUMO2). Residues 85 to 105 form a disordered region; sequence RNKRKRKTSDDGGDSPEHDTD. Positions 86 to 91 match the Nuclear localization signal (NLS) motif; it reads NKRKRK. The segment at 88 to 90 is important for DNA and phosphoinositide binding; the sequence is RKR. At T92 the chain carries Phosphothreonine. Phosphoserine is present on residues S93 and S99. The residue at position 104 (T104) is a Phosphothreonine. Residues K155, K166, and K175 each participate in a glycyl lysine isopeptide (Lys-Gly) (interchain with G-Cter in SUMO2) cross-link.

It belongs to the SAP30 family. In terms of assembly, interacts with components of the histone deacetylase complex SIN3A, HDAC1 and HDAC2. Binds histones and nucleosomes. Interacts with FEZ1. Detected in brain and ovary, and at lower levels in heart, small intestine, lung, kidney, skeletal muscle, stomach and spleen (at protein level). Ubiquitous; expressed in all tissues tested with highest levels in testis.

It localises to the nucleus. Its subcellular location is the nucleolus. In terms of biological role, functions as a transcription repressor, probably via its interaction with histone deacetylase complexes. Involved in the functional recruitment of the class 1 Sin3-histone deacetylase complex (HDAC) to the nucleolus. Binds DNA, apparently without sequence-specificity, and bends bound double-stranded DNA. Binds phosphoinositol phosphates (phosphoinositol 3-phosphate, phosphoinositol 4-phosphate and phosphoinositol 5-phosphate) via the same basic sequence motif that mediates DNA binding and nuclear import. Functionally, functions as a transcription repressor; isoform 2 has lower transcription repressor activity than isoform 1 and isoform 3. Its function is as follows. Functions as a transcription repressor; its activity is marginally lower than that of isoform 1. The chain is Histone deacetylase complex subunit SAP30L (SAP30L) from Homo sapiens (Human).